The following is a 131-amino-acid chain: Small ribosomal subunit protein uS8 (131 aa).

This sequence belongs to the universal ribosomal protein uS8 family. In terms of assembly, part of the 30S ribosomal subunit. Contacts proteins S5 and S12.

One of the primary rRNA binding proteins, it binds directly to 16S rRNA central domain where it helps coordinate assembly of the platform of the 30S subunit. The sequence is that of Small ribosomal subunit protein uS8 from Aromatoleum aromaticum (strain DSM 19018 / LMG 30748 / EbN1) (Azoarcus sp. (strain EbN1)).